The primary structure comprises 297 residues: Nucleotide-binding protein Bphyt_0592 (297 aa).

8–15 (GISGSGKS) contacts ATP. 57 to 60 (DARS) is a GTP binding site.

The protein belongs to the RapZ-like family.

In terms of biological role, displays ATPase and GTPase activities. The protein is Nucleotide-binding protein Bphyt_0592 of Paraburkholderia phytofirmans (strain DSM 17436 / LMG 22146 / PsJN) (Burkholderia phytofirmans).